Reading from the N-terminus, the 444-residue chain is ATPase PAAT (444 aa).

A phosphoserine mark is found at Ser-177, Ser-182, and Ser-254. Residues 279-300 (SAQPSGEGNTTNHDEGHLMPQN) are disordered. The span at 280–289 (AQPSGEGNTT) shows a compositional bias: polar residues. Position 302 is a phosphoserine (Ser-302). The disordered stretch occupies residues 424–444 (PPPGMPLRHYDSRERLSNGER). Over residues 431–444 (RHYDSRERLSNGER) the composition is skewed to basic and acidic residues.

As to quaternary structure, homodimer. Interacts with ABCB7, ABCB8/MITOSUR and ABCB10.

Its subcellular location is the cytoplasm. It is found in the mitochondrion. It carries out the reaction ATP + H2O = ADP + phosphate + H(+). Its function is as follows. ATPase that regulates mitochondrial ABC transporters ABCB7, ABCB8/MITOSUR and ABCB10. Regulates mitochondrial ferric concentration and heme biosynthesis and plays a role in the maintenance of mitochondrial homeostasis and cell survival. The chain is ATPase PAAT from Mus musculus (Mouse).